A 248-amino-acid chain; its full sequence is MYKLVLIRHGESTWNKENRFTGWVDVDLTEQGNLEAQQAGTLLKDSGYMFDIAYTSVLKRAIRTLWHVQDKMDLMYLPVVHSWRLNERHYGALSGLNKAETAARFGDEQVLVWRRSYDTPPPALEPTDSRTSYDDPRYAKVPREELPLTECLKDTVARVMPIWNESIAPAIKSGRKVLIAAHGNSIRALVKYLDNISDSDIVGLNIPNGVPLVYELDENLKPIKHYYLGDQEAIAKAQAAVAKQGKAG.

Residues 8–15, 21–22, Arg-60, 87–90, Lys-98, 114–115, and 183–184 each bind substrate; these read RHGESTWN, TG, ERHY, RR, and GN. His-9 functions as the Tele-phosphohistidine intermediate in the catalytic mechanism. The active-site Proton donor/acceptor is the Glu-87.

The protein belongs to the phosphoglycerate mutase family. BPG-dependent PGAM subfamily. In terms of assembly, homodimer.

It catalyses the reaction (2R)-2-phosphoglycerate = (2R)-3-phosphoglycerate. Its pathway is carbohydrate degradation; glycolysis; pyruvate from D-glyceraldehyde 3-phosphate: step 3/5. Its function is as follows. Catalyzes the interconversion of 2-phosphoglycerate and 3-phosphoglycerate. This is 2,3-bisphosphoglycerate-dependent phosphoglycerate mutase from Paraburkholderia phymatum (strain DSM 17167 / CIP 108236 / LMG 21445 / STM815) (Burkholderia phymatum).